A 158-amino-acid chain; its full sequence is MKISTTRFGMIEISESDIILMRRGILGFEESKKYALLYQDVKNPFLWFQSLDDGATAFVVIDPFLLQPYYQPELNDDTLEKLEIDNPEDVALMVIVSIRSNPVLLTANLRAPIVINAAKKKACQVVLEDSRFPIRYDILKNREFLLGGHCYEISATAP.

It belongs to the FliW family. As to quaternary structure, interacts with translational regulator CsrA and flagellin(s).

It localises to the cytoplasm. In terms of biological role, acts as an anti-CsrA protein, binds CsrA and prevents it from repressing translation of its target genes, one of which is flagellin. Binds to flagellin and participates in the assembly of the flagellum. This is Flagellar assembly factor FliW from Syntrophus aciditrophicus (strain SB).